A 62-amino-acid polypeptide reads, in one-letter code: Sperm protamine P1 (62 aa).

The disordered stretch occupies residues 1–62; it reads MARYRHSXSR…RYSRRRRRRY (62 aa).

Belongs to the protamine P1 family. As to expression, testis.

Its subcellular location is the nucleus. The protein resides in the chromosome. Its function is as follows. Protamines substitute for histones in the chromatin of sperm during the haploid phase of spermatogenesis. They compact sperm DNA into a highly condensed, stable and inactive complex. The protein is Sperm protamine P1 (PRM1) of Petrogale xanthopus (Yellow-footed rock wallaby).